Consider the following 153-residue polypeptide: Ribosome maturation factor RimP (153 aa).

Belongs to the RimP family.

The protein resides in the cytoplasm. Its function is as follows. Required for maturation of 30S ribosomal subunits. The polypeptide is Ribosome maturation factor RimP (Clostridium botulinum (strain Okra / Type B1)).